The chain runs to 659 residues: 1,4-alpha-glucan branching enzyme GlgB (659 aa).

Residues 1 to 12 (MRNCKELKHEKN) show a composition bias toward basic and acidic residues. Residues 1–25 (MRNCKELKHEKNGNVTEKIGKNKGK) are disordered. Residue D337 is the Nucleophile of the active site. E390 functions as the Proton donor in the catalytic mechanism.

It belongs to the glycosyl hydrolase 13 family. GlgB subfamily. Monomer.

The enzyme catalyses Transfers a segment of a (1-&gt;4)-alpha-D-glucan chain to a primary hydroxy group in a similar glucan chain.. Its pathway is glycan biosynthesis; glycogen biosynthesis. Its function is as follows. Catalyzes the formation of the alpha-1,6-glucosidic linkages in glycogen by scission of a 1,4-alpha-linked oligosaccharide from growing alpha-1,4-glucan chains and the subsequent attachment of the oligosaccharide to the alpha-1,6 position. In Clostridium perfringens (strain ATCC 13124 / DSM 756 / JCM 1290 / NCIMB 6125 / NCTC 8237 / Type A), this protein is 1,4-alpha-glucan branching enzyme GlgB.